Reading from the N-terminus, the 150-residue chain is MSKLSQPASTAGVNGISVIHTQAHASGLQQVPQLVPAGPGGGGKAVPPSKQSKKSSPMDRNSDEYRQRRERNNMAVKKSRLKSKQKAQDTLQRVNQLKEENERLEAKIKLLTKELSVLKDLFLEHAHNLADNVQPISTETTVANSDNTGQ.

Lysine 3 is covalently cross-linked (Glycyl lysine isopeptide (Lys-Gly) (interchain with G-Cter in SUMO2)). The interval 27–94 (GLQQVPQLVP…QKAQDTLQRV (68 aa)) is disordered. Residues 28–37 (LQQVPQLVPA) are compositionally biased toward low complexity. The segment covering 56-72 (SPMDRNSDEYRQRRERN) has biased composition (basic and acidic residues). Residues 62–125 (SDEYRQRRER…SVLKDLFLEH (64 aa)) form the bZIP domain. The basic motif stretch occupies residues 66 to 93 (RQRRERNNMAVKKSRLKSKQKAQDTLQR). Positions 97–118 (LKEENERLEAKIKLLTKELSVL) are leucine-zipper.

This sequence belongs to the bZIP family. C/EBP subfamily. As to quaternary structure, binds DNA as a dimer and can form stable heterodimers with CEBPA and CEBPB. Interacts with ZNF638; this interaction increases transcriptional activation.

It is found in the nucleus. Functionally, transcription factor that binds to the promoter and the enhancer regions of target genes. Binds to the promoter and the enhancer of the alpha-1-fetoprotein gene. Binds to the enhancer element PRE-I (positive regulatory element-I) of the IL-4 gene. Binds to the promoter and the enhancer of the immunoglobulin heavy chain. Binds to GPE1, a cis-acting element in the G-CSF gene promoter. This Rattus norvegicus (Rat) protein is CCAAT/enhancer-binding protein gamma (Cebpg).